The following is a 34-amino-acid chain: MSDIN-like toxin proprotein 3 (34 aa).

The propeptide occupies 1-10 (MSDINVIRAP). Positions 11–18 (LLILSILP) form a cross-link, cyclopeptide (Leu-Pro). Positions 19 to 34 (CVGDDIEVLRRGEGLS) are excised as a propeptide.

The protein belongs to the MSDIN fungal toxin family. Post-translationally, processed by the macrocyclase-peptidase enzyme POPB to yield a toxic cyclic octapeptide. POPB first removes 10 residues from the N-terminus. Conformational trapping of the remaining peptide forces the enzyme to release this intermediate rather than proceed to macrocyclization. The enzyme rebinds the remaining peptide in a different conformation and catalyzes macrocyclization of the N-terminal 8 residues. In terms of tissue distribution, expressed in basidiocarps.

In terms of biological role, probable toxin that belongs to the MSDIN-like toxin family responsible for a large number of food poisoning cases and deaths. This is MSDIN-like toxin proprotein 3 from Amanita exitialis (Guangzhou destroying angel).